The primary structure comprises 121 residues: Large ribosomal subunit protein bL20 (121 aa).

This sequence belongs to the bacterial ribosomal protein bL20 family.

Functionally, binds directly to 23S ribosomal RNA and is necessary for the in vitro assembly process of the 50S ribosomal subunit. It is not involved in the protein synthesizing functions of that subunit. This is Large ribosomal subunit protein bL20 from Ruegeria sp. (strain TM1040) (Silicibacter sp.).